The following is a 324-amino-acid chain: Adenine deaminase (324 aa).

Residues His8, His10, and His186 each contribute to the Zn(2+) site. Residue Glu189 is the Proton donor of the active site. Position 267 (Asp267) interacts with Zn(2+). Asp268 is a binding site for substrate.

This sequence belongs to the metallo-dependent hydrolases superfamily. Adenosine and AMP deaminases family. Adenine deaminase type 2 subfamily. Zn(2+) serves as cofactor.

It catalyses the reaction adenine + H2O + H(+) = hypoxanthine + NH4(+). Its function is as follows. Catalyzes the hydrolytic deamination of adenine to hypoxanthine. Plays an important role in the purine salvage pathway and in nitrogen catabolism. The polypeptide is Adenine deaminase (Mesorhizobium japonicum (strain LMG 29417 / CECT 9101 / MAFF 303099) (Mesorhizobium loti (strain MAFF 303099))).